A 204-amino-acid chain; its full sequence is Putative rubrerythrin (204 aa).

The 159-residue stretch at 1 to 159 (MINNFFVINM…KLLKEVEEGT (159 aa)) folds into the Ferritin-like diiron domain. E24, E57, E107, E110, E141, H144, C171, C174, C187, and C190 together coordinate Fe(3+). Residues 166-204 (PVEWVCRKCGFVHLGKEPPEKCPSCSHPRKYFEVKCEKY) form the Rubredoxin-like domain.

Homodimer. Possesses two rubredoxin-like centers and two non-sulfur oxo-bridged di-iron centers per dimer. It depends on Fe(3+) as a cofactor.

The protein resides in the cytoplasm. May provide oxidative stress protection via catalytic reduction of intracellular hydrogen peroxide. The protein is Putative rubrerythrin of Methanocaldococcus jannaschii (strain ATCC 43067 / DSM 2661 / JAL-1 / JCM 10045 / NBRC 100440) (Methanococcus jannaschii).